The chain runs to 61 residues: Photosystem II reaction center protein K (61 aa).

Positions 1–24 (MINIVSLVCIYINSVPYSSIFFLD) are excised as a propeptide. A helical membrane pass occupies residues 36–56 (IVDIMPVIPLFFFLLAFVWQA).

It belongs to the PsbK family. PSII is composed of 1 copy each of membrane proteins PsbA, PsbB, PsbC, PsbD, PsbE, PsbF, PsbH, PsbI, PsbJ, PsbK, PsbL, PsbM, PsbT, PsbX, PsbY, PsbZ, Psb30/Ycf12, at least 3 peripheral proteins of the oxygen-evolving complex and a large number of cofactors. It forms dimeric complexes.

The protein resides in the plastid. Its subcellular location is the chloroplast thylakoid membrane. One of the components of the core complex of photosystem II (PSII). PSII is a light-driven water:plastoquinone oxidoreductase that uses light energy to abstract electrons from H(2)O, generating O(2) and a proton gradient subsequently used for ATP formation. It consists of a core antenna complex that captures photons, and an electron transfer chain that converts photonic excitation into a charge separation. The sequence is that of Photosystem II reaction center protein K from Lotus japonicus (Lotus corniculatus var. japonicus).